Here is a 473-residue protein sequence, read N- to C-terminus: 3-isopropylmalate dehydratase large subunit (473 aa).

Residues C354, C414, and C417 each contribute to the [4Fe-4S] cluster site.

It belongs to the aconitase/IPM isomerase family. LeuC type 1 subfamily. In terms of assembly, heterodimer of LeuC and LeuD. Requires [4Fe-4S] cluster as cofactor.

The enzyme catalyses (2R,3S)-3-isopropylmalate = (2S)-2-isopropylmalate. It functions in the pathway amino-acid biosynthesis; L-leucine biosynthesis; L-leucine from 3-methyl-2-oxobutanoate: step 2/4. Functionally, catalyzes the isomerization between 2-isopropylmalate and 3-isopropylmalate, via the formation of 2-isopropylmaleate. This is 3-isopropylmalate dehydratase large subunit from Mycobacterium marinum (strain ATCC BAA-535 / M).